A 159-amino-acid polypeptide reads, in one-letter code: Short coiled-coil protein (159 aa).

Positions 78-146 form a coiled coil; sequence MMNADMDAVD…QYIENLMSAS (69 aa).

The protein belongs to the SCOC family. In terms of assembly, homodimer. Interacts with ARL1, ARL2 and ARL3. Directly interacts with FEZ1 and UVRAG. The interaction with UVRAG is reduced by amino acid starvation, but the complex is stabilized in the presence of FEZ1. Interacts with NRBF2. As to expression, widely expressed with highest levels in brain, heart and skeletal muscle.

The protein localises to the golgi apparatus membrane. The protein resides in the golgi apparatus. Its subcellular location is the trans-Golgi network. It localises to the cytoplasm. It is found in the cytosol. In terms of biological role, positive regulator of amino acid starvation-induced autophagy. The sequence is that of Short coiled-coil protein (SCOC) from Homo sapiens (Human).